We begin with the raw amino-acid sequence, 35 residues long: uncharacterized protein (35 aa).

The chain crosses the membrane as a helical span at residues 10–30 (LMITASFFAIFIIIVVSVLLL).

It is found in the membrane. This is an uncharacterized protein from Salmonella paratyphi A (strain ATCC 9150 / SARB42).